Consider the following 864-residue polypeptide: Protein 4.1 (864 aa).

Composition is skewed to polar residues over residues 1–16 (MTTEKSLVTEAENSQH) and 27–41 (NSGQQEPQQEESCQT). Disordered stretches follow at residues 1–122 (MTTE…GTSL), 136–170 (EPELKTDPSLDLHSLSSAETQPAQEELREDPDFEI), and 182–202 (IEVKEESPQSKAETELKASQK). Position 14 is a phosphoserine (Ser-14). A Phosphothreonine; by CDK1 modification is found at Thr-60. Residues 61–75 (PTHEDLTKNKERTSE) are compositionally biased toward basic and acidic residues. The segment covering 76-87 (SRGLSRLFSSFL) has biased composition (low complexity). 10 positions are modified to phosphoserine: Ser-84, Ser-85, Ser-95, Ser-104, Ser-121, Ser-149, Ser-151, Ser-152, Ser-188, and Ser-191. Residues 101–117 (EVESDKEKGEGGQKEIE) are compositionally biased toward basic and acidic residues. A compositionally biased stretch (polar residues) spans 149–158 (SLSSAETQPA). Positions 182–199 (IEVKEESPQSKAETELKA) are enriched in basic and acidic residues. One can recognise an FERM domain in the interval 210-491 (MHCKVSLLDD…EHHTFFRLTS (282 aa)). At Tyr-222 the chain carries Phosphotyrosine. A Phosphothreonine modification is found at Thr-378. A hydrophilic region spans residues 494-614 (TIPKSKFLAL…QAEPEPTEAW (121 aa)). 2 disordered regions span residues 518–572 (RQAS…VAEG) and 586–611 (KAQKETVKAEVKKEDEPPEQAEPEPT). 4 positions are modified to phosphoserine: Ser-521, Ser-540, Ser-542, and Ser-555. The segment covering 587 to 600 (AQKETVKAEVKKED) has biased composition (basic and acidic residues). Positions 601–610 (EPPEQAEPEP) are enriched in acidic residues. The interval 615–713 (KVEKTHIEVT…WDKRLSTHSP (99 aa)) is spectrin--actin-binding. Tyr-660 is subject to Phosphotyrosine; by EGFR. 4 positions are modified to phosphoserine: Ser-664, Ser-674, Ser-684, and Ser-709. Ser-712 is subject to Phosphoserine; by CDK1. The interval 714 to 864 (FRTLNINGQI…VHQETEIADE (151 aa)) is C-terminal (CTD). Residues Thr-736 and Thr-859 each carry the phosphothreonine modification.

In terms of assembly, binds with a high affinity to glycophorin and with lower affinity to band III protein. Associates with the nuclear mitotic apparatus. Interacts with calmodulin. Interacts with CPAP. Interacts with DLG1. Also found to associate with contractile apparatus and tight junctions. Interacts with NUMA1; this interaction is negatively regulated by CDK1 during metaphase and promotes anaphase-specific localization of NUMA1 in symmetrically dividing cells. Interacts with ATP2B1; regulates small intestinal calcium absorption through regulation of membrane expression of ATP2B1. In terms of processing, phosphorylated at multiple sites by different protein kinases and each phosphorylation event selectively modulates the protein's functions. Phosphorylation on Tyr-660 reduces the ability of 4.1 to promote the assembly of the spectrin/actin/4.1 ternary complex. Post-translationally, O-glycosylated; contains N-acetylglucosamine side chains in the C-terminal domain.

The protein localises to the cytoplasm. It is found in the cytoskeleton. Its subcellular location is the cell cortex. It localises to the nucleus. Its function is as follows. Protein 4.1 is a major structural element of the erythrocyte membrane skeleton. It plays a key role in regulating membrane physical properties of mechanical stability and deformability by stabilizing spectrin-actin interaction. Recruits DLG1 to membranes. Required for dynein-dynactin complex and NUMA1 recruitment at the mitotic cell cortex during anaphase. The protein is Protein 4.1 of Homo sapiens (Human).